The sequence spans 1346 residues: Adhesion G protein-coupled receptor A3 (1346 aa).

An N-terminal signal peptide occupies residues 1 to 21; it reads MSVLCVLLLAFVLPLRGSSSA. The segment at 18–45 is disordered; sequence SSSAGSTECKTYDERSRSAGKSSPSGAT. The Extracellular segment spans residues 22–739; that stretch reads GSTECKTYDE…NVFIFRPLHP (718 aa). LRR repeat units lie at residues 66–90, 91–114, 116–138, and 139–162; these read FPNR…SFVG, LSSL…AFYG, FSLK…VFKG, and LTNL…IFDS. The LRRCT domain maps to 176–223; sequence LLCDCNLQWLVVWIKEKAIGVKETRCSFPRSLQGQLITTLRAETLTCD. In terms of domain architecture, Ig-like spans 229-327; the sequence is PSFQMTPSQH…GNNTRTVHIV (99 aa). C251 and C311 are oxidised to a cystine. 3 LRR repeats span residues 503–529, 574–600, and 611–632; these read LQRI…ALEA, TSNL…LFSS, and VYKL…GNSS. Residues 563 to 728 form the GAIN-B domain; the sequence is PERQLSFKCN…AVLMDLNRTG (166 aa). Positions 679 to 728 are GPS; it reads PAFWNFSLQGGQGGWQSDGCRILHQDDNFTTVSCHSLNSYAVLMDLNRTG. Residues C698 and C712 are joined by a disulfide bond. The helical transmembrane segment at 740-760 threads the bilayer; it reads VIYSTALVLVLCLLSVIVSYI. Topologically, residues 761 to 773 are cytoplasmic; it reads YHHKSVRISKKCW. A helical transmembrane segment spans residues 774 to 794; it reads HMLVNLCLHILLTCAVFVGGI. Residues 795-804 are Extracellular-facing; that stretch reads NQTYNASVCQ. A helical transmembrane segment spans residues 805 to 825; that stretch reads AMGIVLHYSTLATALWSGVTA. Over 826-854 the chain is Cytoplasmic; that stretch reads RNIYKQVTRKAKRYEELDEPPPPPRPMLR. The chain crosses the membrane as a helical span at residues 855–875; sequence FYLIGGGIPIIVCGITAAANI. The Extracellular segment spans residues 876-897; it reads KNYGSQVNAPYCWMAWEPSLGA. A helical membrane pass occupies residues 898–918; sequence FYGPAAFIVFVDCMYFLSILI. The Cytoplasmic segment spans residues 919–977; that stretch reads QLRRHPERRFELKEQSEEQQHLSVTEATEITPVHLESSPTAQPVPMSALENEHTFVSQL. Residues 978–998 form a helical membrane-spanning segment; that stretch reads MGVAGSLTLYAALWVFGALAI. The Extracellular portion of the chain corresponds to 999–1005; that stretch reads SQEHPAD. A helical transmembrane segment spans residues 1006–1026; that stretch reads LVFACLFGALALGLGAFLVAH. Over 1027-1346 the chain is Cytoplasmic; that stretch reads HCVNRQDMRR…TGLWKHETTV (320 aa). Polar residues predominate over residues 1157–1169; it reads SVNNNNLPGNANI. 2 disordered regions span residues 1157–1188 and 1202–1284; these read SVNN…RASR and SVEG…DGSE. Basic residues-rich tracts occupy residues 1173–1187 and 1212–1226; these read PGRH…HRAS and NKRH…RNSR. The segment covering 1238–1252 has biased composition (low complexity); that stretch reads QSQLQQDSSDAASTS. Over residues 1266–1280 the composition is skewed to gly residues; the sequence is IGNGFGHGISNGGLL. The PDZ-binding signature appears at 1344-1346; sequence TTV.

It belongs to the G-protein coupled receptor 2 family. Adhesion G-protein coupled receptor (ADGR) subfamily. Interacts (via PDZ-binding motif) with disheveled proteins; leading to the localization of dishevelled proteins to specific membrane subdomains. Ubiquitously expressed at very low levels.

The protein localises to the cell membrane. Functionally, orphan receptor that acts as a critical modulator of planar cell polarity during gastrulation. Controls the localization of dishevelled. In Danio rerio (Zebrafish), this protein is Adhesion G protein-coupled receptor A3 (adgra3).